A 351-amino-acid chain; its full sequence is Anthranilate phosphoribosyltransferase (351 aa).

Residues Gly-80, 83-84, Thr-88, 90-93, 108-116, and Ser-120 each bind 5-phospho-alpha-D-ribose 1-diphosphate; these read GD, NIST, and KHGNRSITS. Position 80 (Gly-80) interacts with anthranilate. Ser-92 contributes to the Mg(2+) binding site. Residue Asn-111 coordinates anthranilate. Residue Arg-166 coordinates anthranilate. Positions 229 and 230 each coordinate Mg(2+).

It belongs to the anthranilate phosphoribosyltransferase family. As to quaternary structure, homodimer. The cofactor is Mg(2+).

It catalyses the reaction N-(5-phospho-beta-D-ribosyl)anthranilate + diphosphate = 5-phospho-alpha-D-ribose 1-diphosphate + anthranilate. It participates in amino-acid biosynthesis; L-tryptophan biosynthesis; L-tryptophan from chorismate: step 2/5. Functionally, catalyzes the transfer of the phosphoribosyl group of 5-phosphorylribose-1-pyrophosphate (PRPP) to anthranilate to yield N-(5'-phosphoribosyl)-anthranilate (PRA). This chain is Anthranilate phosphoribosyltransferase, found in Chlorobaculum tepidum (strain ATCC 49652 / DSM 12025 / NBRC 103806 / TLS) (Chlorobium tepidum).